Here is a 429-residue protein sequence, read N- to C-terminus: uncharacterized protein (429 aa).

Catalysis depends on charge relay system residues Ser-116, Asp-179, and His-206.

Belongs to the AB hydrolase 3 family.

It is found in the cytoplasm. Its subcellular location is the nucleus. This is an uncharacterized protein from Schizosaccharomyces pombe (strain 972 / ATCC 24843) (Fission yeast).